The chain runs to 185 residues: Elongation factor P (185 aa).

The protein belongs to the elongation factor P family.

The protein localises to the cytoplasm. Its pathway is protein biosynthesis; polypeptide chain elongation. In terms of biological role, involved in peptide bond synthesis. Stimulates efficient translation and peptide-bond synthesis on native or reconstituted 70S ribosomes in vitro. Probably functions indirectly by altering the affinity of the ribosome for aminoacyl-tRNA, thus increasing their reactivity as acceptors for peptidyl transferase. This chain is Elongation factor P, found in Clostridioides difficile (strain 630) (Peptoclostridium difficile).